We begin with the raw amino-acid sequence, 37 residues long: Potassium channel toxin alpha-KTx 11.1 (37 aa).

Intrachain disulfides connect Cys8/Cys27, Cys13/Cys33, and Cys17/Cys35.

Belongs to the short scorpion toxin superfamily. Potassium channel inhibitor family. Alpha-KTx 11 subfamily. In terms of tissue distribution, expressed by the venom gland.

It localises to the secreted. In terms of biological role, binds and inhibits voltage-sensitive potassium channels. Inhibits the vertebrate potassium channels Kv1.1/KCNA1, Kv1.2/KCNA2 and Kv1.3/KCNA3 with low affinity. Also weakly inhibits Kv7.1/KCNQ1 (10 uM of the toxin inhibits currents by 21.43%). This is Potassium channel toxin alpha-KTx 11.1 from Parabuthus villosus (Black hairy thick-tailed scorpion).